The chain runs to 521 residues: Glutamate--tRNA ligase (521 aa).

Positions 13 to 23 (PSPSGFLHVGG) match the 'HIGH' region motif. Residues 253–257 (KLSKR) carry the 'KMSKS' region motif. Lys-256 contributes to the ATP binding site.

It belongs to the class-I aminoacyl-tRNA synthetase family. Glutamate--tRNA ligase type 1 subfamily. Monomer.

It localises to the cytoplasm. The enzyme catalyses tRNA(Glu) + L-glutamate + ATP = L-glutamyl-tRNA(Glu) + AMP + diphosphate. In terms of biological role, catalyzes the attachment of glutamate to tRNA(Glu) in a two-step reaction: glutamate is first activated by ATP to form Glu-AMP and then transferred to the acceptor end of tRNA(Glu). The polypeptide is Glutamate--tRNA ligase (Leptospira interrogans serogroup Icterohaemorrhagiae serovar copenhageni (strain Fiocruz L1-130)).